A 104-amino-acid chain; its full sequence is Large ribosomal subunit protein bL21 (104 aa).

The protein belongs to the bacterial ribosomal protein bL21 family. As to quaternary structure, part of the 50S ribosomal subunit. Contacts protein L20.

Functionally, this protein binds to 23S rRNA in the presence of protein L20. The protein is Large ribosomal subunit protein bL21 of Streptococcus thermophilus (strain ATCC BAA-491 / LMD-9).